The sequence spans 258 residues: Acetylglutamate kinase (258 aa).

Residues 44-45, Arg66, and Asn158 each bind substrate; that span reads GG. ATP contacts are provided by residues 181 to 186 and 209 to 211; these read DVSGIL and IIT.

This sequence belongs to the acetylglutamate kinase family. ArgB subfamily. In terms of assembly, homodimer.

It is found in the cytoplasm. It catalyses the reaction N-acetyl-L-glutamate + ATP = N-acetyl-L-glutamyl 5-phosphate + ADP. It functions in the pathway amino-acid biosynthesis; L-arginine biosynthesis; N(2)-acetyl-L-ornithine from L-glutamate: step 2/4. In terms of biological role, catalyzes the ATP-dependent phosphorylation of N-acetyl-L-glutamate. This is Acetylglutamate kinase from Citrobacter koseri (strain ATCC BAA-895 / CDC 4225-83 / SGSC4696).